We begin with the raw amino-acid sequence, 330 residues long: MKKQFIQKQQQISFVKSFFSRQLEQQLGLIEVQAPILSRVGDGTQDNLSGSEKAVQVKVKSLPDATFEVVHSLAKWKRKTLGRFDFGADQGIYTHMKALRPDEDRLSAIHSVYVDQWDWERVMGDGERNLAYLKSTVNKIYAAIKETEAAISAEFDIKPFLPEQIHFIHSESLRAKFPDLDAKGRERAIAKELGAVFLIGIGGKLADGKSHDVRAPDYDDWTSPSAEGFAGLNGDIIVWNPVLEDAFEISSMGIRVDAEALKRQLALTSDEDRLKLEWHQSLLNGEMPQTIGGGIGQSRLVMLLLQQQHIGQVQCGVWGPEISEKVEGLL.

Belongs to the class-II aminoacyl-tRNA synthetase family. AsnA subfamily.

The protein resides in the cytoplasm. The enzyme catalyses L-aspartate + NH4(+) + ATP = L-asparagine + AMP + diphosphate + H(+). Its pathway is amino-acid biosynthesis; L-asparagine biosynthesis; L-asparagine from L-aspartate (ammonia route): step 1/1. The sequence is that of Aspartate--ammonia ligase from Yersinia enterocolitica serotype O:8 / biotype 1B (strain NCTC 13174 / 8081).